Reading from the N-terminus, the 475-residue chain is Neuronal acetylcholine receptor subunit alpha-5 (475 aa).

Positions 1–29 (MAAPGWGRWVLGLGPLLLQVFLPFQLVAG) are cleaved as a signal peptide. Residues 30–261 (RWGPEGAGGG…VIKRLPLFYT (232 aa)) are Extracellular-facing. Residues C177 and C191 are joined by a disulfide bond. N-linked (GlcNAc...) asparagine glycosylation is found at N190 and N236. C241 and C242 are joined by a disulfide. 3 consecutive transmembrane segments (helical) span residues 262-282 (LFLI…FYLP), 289-309 (ICLC…IEEI), and 324-344 (LVFT…AINI). At 345-437 (HHRSSSTHDA…KFIAQVLDRM (93 aa)) the chain is on the cytoplasmic side. Residues 438 to 458 (FLWTFLLVSVVGSLGLFVPVI) traverse the membrane as a helical segment. Topologically, residues 459 to 475 (YKWANIIVPIHIGNENK) are extracellular.

Belongs to the ligand-gated ion channel (TC 1.A.9) family. Acetylcholine receptor (TC 1.A.9.1) subfamily. Alpha-5/CHRNA5 sub-subfamily. As to quaternary structure, neuronal AChR that forms heteropentamers composed of two different type of subunits: alpha and non-alpha (beta). CHRNA5/alpha-5 subunit is only able to form functional nAChRs when co-assembled with another alpha subunit, can be combined to CHRNA4/alpha-4 or CHRNA3/alpha-3 and CHRNB4/beta-4 or CHRNB2/beta-2 to give rise to functional receptors. Interacts with LYPD6.

The protein resides in the synaptic cell membrane. Its subcellular location is the cell membrane. It catalyses the reaction Ca(2+)(in) = Ca(2+)(out). It carries out the reaction K(+)(in) = K(+)(out). The catalysed reaction is Na(+)(in) = Na(+)(out). With respect to regulation, activated by a myriad of ligands such as acetylcholine, cytisine, nicotine, choline and epibatidine. Functionally, component of neuronal acetylcholine receptors (nAChRs) that function as pentameric, ligand-gated cation channels with high calcium permeability among other activities. nAChRs are excitatory neurotrasnmitter receptors formed by a collection of nAChR subunits known to mediate synaptic transmission in the nervous system and the neuromuscular junction. Each nAchR subunit confers differential attributes to channel properties, including activation, deactivation and desensitization kinetics, pH sensitivity, cation permeability, and binding to allosteric modulators. Has an accessory rather than functional role and is only able to form functional nAChRs when co-assembled with another beta subunit. Participates in pentameric assemblies along with CHRNA3, CHRNA4, CHRNB2 and CHRNB4. Increases receptor sensitivity to acetylcholine and nicotine when associated with CHRNA4 and CHRNB2. Plays a role in nicotine addiction. The sequence is that of Neuronal acetylcholine receptor subunit alpha-5 (CHRNA5) from Bos taurus (Bovine).